Reading from the N-terminus, the 440-residue chain is Adenylosuccinate lyase (440 aa).

N(6)-(1,2-dicarboxyethyl)-AMP contacts are provided by residues 4-5, 67-69, and 93-94; these read RY, KHD, and TS. Catalysis depends on H141, which acts as the Proton donor/acceptor. Position 212 (Q212) interacts with N(6)-(1,2-dicarboxyethyl)-AMP. S262 acts as the Proton donor/acceptor in catalysis. Residues S263, 268-270, N276, and 307-311 contribute to the N(6)-(1,2-dicarboxyethyl)-AMP site; these read KRN and SVERF.

This sequence belongs to the lyase 1 family. Adenylosuccinate lyase subfamily. As to quaternary structure, homotetramer. Residues from neighboring subunits contribute catalytic and substrate-binding residues to each active site.

It carries out the reaction N(6)-(1,2-dicarboxyethyl)-AMP = fumarate + AMP. The catalysed reaction is (2S)-2-[5-amino-1-(5-phospho-beta-D-ribosyl)imidazole-4-carboxamido]succinate = 5-amino-1-(5-phospho-beta-D-ribosyl)imidazole-4-carboxamide + fumarate. The protein operates within purine metabolism; AMP biosynthesis via de novo pathway; AMP from IMP: step 2/2. It functions in the pathway purine metabolism; IMP biosynthesis via de novo pathway; 5-amino-1-(5-phospho-D-ribosyl)imidazole-4-carboxamide from 5-amino-1-(5-phospho-D-ribosyl)imidazole-4-carboxylate: step 2/2. Functionally, catalyzes two reactions in de novo purine nucleotide biosynthesis. Catalyzes the breakdown of 5-aminoimidazole- (N-succinylocarboxamide) ribotide (SAICAR or 2-[5-amino-1-(5-phospho-beta-D-ribosyl)imidazole-4-carboxamido]succinate) to 5-aminoimidazole-4-carboxamide ribotide (AICAR or 5-amino-1-(5-phospho-beta-D-ribosyl)imidazole-4-carboxamide) and fumarate, and of adenylosuccinate (ADS or N(6)-(1,2-dicarboxyethyl)-AMP) to adenosine monophosphate (AMP) and fumarate. In Helicobacter pylori (strain ATCC 700392 / 26695) (Campylobacter pylori), this protein is Adenylosuccinate lyase (purB).